The following is a 298-amino-acid chain: Tyrosine recombinase XerC (298 aa).

The Core-binding (CB) domain maps to 1–84 (MNHIQDAFLN…TLRTFYEYWM (84 aa)). One can recognise a Tyr recombinase domain in the interval 105–286 (YLPQFFYEEE…SNQQLRKVYL (182 aa)). Residues Arg-145, Lys-169, His-238, Arg-241, and His-264 contribute to the active site. The active-site O-(3'-phospho-DNA)-tyrosine intermediate is the Tyr-273.

This sequence belongs to the 'phage' integrase family. XerC subfamily. Forms a cyclic heterotetrameric complex composed of two molecules of XerC and two molecules of XerD.

The protein localises to the cytoplasm. Functionally, site-specific tyrosine recombinase, which acts by catalyzing the cutting and rejoining of the recombining DNA molecules. The XerC-XerD complex is essential to convert dimers of the bacterial chromosome into monomers to permit their segregation at cell division. It also contributes to the segregational stability of plasmids. The sequence is that of Tyrosine recombinase XerC from Staphylococcus aureus (strain USA300).